We begin with the raw amino-acid sequence, 60 residues long: Large ribosomal subunit protein bL32 (60 aa).

The interval 1–27 (MAVPRNRLSNARKNSKRAHHAKKPKSL) is disordered. Basic residues predominate over residues 13-25 (KNSKRAHHAKKPK).

The protein belongs to the bacterial ribosomal protein bL32 family.

The protein is Large ribosomal subunit protein bL32 of Protochlamydia amoebophila (strain UWE25).